We begin with the raw amino-acid sequence, 440 residues long: 5-methylthioadenosine/S-adenosylhomocysteine deaminase (440 aa).

His70 and His72 together coordinate Zn(2+). Residues Glu99 and His191 each contribute to the substrate site. His218 serves as a coordination point for Zn(2+). Residues Glu221 and Asp306 each coordinate substrate. Asp306 provides a ligand contact to Zn(2+).

This sequence belongs to the metallo-dependent hydrolases superfamily. MTA/SAH deaminase family. The cofactor is Zn(2+).

The enzyme catalyses S-adenosyl-L-homocysteine + H2O + H(+) = S-inosyl-L-homocysteine + NH4(+). It catalyses the reaction S-methyl-5'-thioadenosine + H2O + H(+) = S-methyl-5'-thioinosine + NH4(+). Catalyzes the deamination of 5-methylthioadenosine and S-adenosyl-L-homocysteine into 5-methylthioinosine and S-inosyl-L-homocysteine, respectively. Is also able to deaminate adenosine. The chain is 5-methylthioadenosine/S-adenosylhomocysteine deaminase from Nitratidesulfovibrio vulgaris (strain DSM 19637 / Miyazaki F) (Desulfovibrio vulgaris).